A 469-amino-acid chain; its full sequence is E3 ubiquitin-protein ligase pellino homolog 3 (469 aa).

The segment at 1–39 (MVLEGNPEVGSPRTSDLQHRGNKGSCVLSSPGEDAQPGE) is disordered. Position 11 is a phosphoserine (serine 11).

It belongs to the pellino family. As to quaternary structure, interacts with TRAF6, MAP3K14 and MAP3K7. In terms of processing, phosphorylated by IRAK1 enhancing its E3 ligase activity. As to expression, highly expressed in brain, heart and testis, and at lower level in kidney, liver, lung, placenta, small intestine, spleen and stomach. Isoform 1 is not expressed in lung.

It catalyses the reaction S-ubiquitinyl-[E2 ubiquitin-conjugating enzyme]-L-cysteine + [acceptor protein]-L-lysine = [E2 ubiquitin-conjugating enzyme]-L-cysteine + N(6)-ubiquitinyl-[acceptor protein]-L-lysine.. The protein operates within protein modification; protein ubiquitination. Functionally, E3 ubiquitin ligase catalyzing the covalent attachment of ubiquitin moieties onto substrate proteins. Involved in the TLR and IL-1 signaling pathways via interaction with the complex containing IRAK kinases and TRAF6. Mediates 'Lys-63'-linked polyubiquitination of IRAK1. Can activate AP1/JUN and ELK1. Acts as a regulator of innate immunity by mediating 'Lys-63'-linked polyubiquitination of RIPK2 downstream of NOD1 and NOD2, thereby transforming RIPK2 into a scaffolding protein for downstream effectors, ultimately leading to activation of the NF-kappa-B and MAP kinases signaling. Catalyzes 'Lys-63'-linked polyubiquitination of RIPK2 in parallel of XIAP. The sequence is that of E3 ubiquitin-protein ligase pellino homolog 3 from Homo sapiens (Human).